Consider the following 221-residue polypeptide: Phosphoglycolate phosphatase (221 aa).

The active-site Nucleophile is D10. Residues D10, D12, and D168 each coordinate Mg(2+).

Belongs to the HAD-like hydrolase superfamily. CbbY/CbbZ/Gph/YieH family. Requires Mg(2+) as cofactor.

It carries out the reaction 2-phosphoglycolate + H2O = glycolate + phosphate. Its pathway is organic acid metabolism; glycolate biosynthesis; glycolate from 2-phosphoglycolate: step 1/1. Functionally, specifically catalyzes the dephosphorylation of 2-phosphoglycolate. Is involved in the dissimilation of the intracellular 2-phosphoglycolate formed during the DNA repair of 3'-phosphoglycolate ends, a major class of DNA lesions induced by oxidative stress. The polypeptide is Phosphoglycolate phosphatase (Xanthomonas campestris pv. campestris (strain 8004)).